Reading from the N-terminus, the 132-residue chain is Large ribosomal subunit protein eL28 (132 aa).

It belongs to the eukaryotic ribosomal protein eL28 family.

The sequence is that of Large ribosomal subunit protein eL28 (rpl28) from Dictyostelium discoideum (Social amoeba).